The primary structure comprises 325 residues: MQGVRITILWCIVLATIYAEEGPSTPRDDDPVIQKVRGLRNAGMKANDERMFKDAIEKLRHAISLLHNRVFGEERAAIKDPTVISQDAALYAQILNDYGSVLIRTKQYDEAIEVLEDSVAMIEKIYGDSHPSLGLSLRSLADAYMEKKAFKSAIKRYKTLRKHVKKGLGMTHEAYIEASLKIAEGYKKLNKKDTSRKVLKDTLKAQGGEINGLTIGIAELYMELSSAHVEVGEIDDALRAAETASAIFLQREGKDTMAYAFSLNALAGVKMQQKKVDEAIDLLDRAHNIAVSIYGENDRITLASAKTLQDVKDHKMNLLAAKDEL.

Positions Met1–Ala19 are cleaved as a signal peptide. TPR repeat units follow at residues Arg37–Arg75, Ala92–Ile125, Gly134–Gly167, Ala218–Arg251, and Ala260–Ile293. Residues Arg37–Arg75 carry the RxLR-dEER motif.

Belongs to the RxLR effector family.

It is found in the secreted. The protein localises to the host cytoplasm. Its subcellular location is the host nucleus. The protein resides in the host nucleolus. Functionally, secreted effector that suppresses pattern-triggered immunity (PTI) in plant host. This Plasmopara halstedii (Downy mildew of sunflower) protein is Secreted RxLR effector protein RXLR-C07.